The following is a 365-amino-acid chain: tRNA-specific 2-thiouridylase MnmA (365 aa).

Residues 14–21 (AMSGGVDS) and leucine 40 each bind ATP. Residue cysteine 108 is the Nucleophile of the active site. Cysteine 108 and cysteine 204 are oxidised to a cystine. Position 132 (glycine 132) interacts with ATP. The interaction with tRNA stretch occupies residues 154 to 156 (KDQ). Cysteine 204 serves as the catalytic Cysteine persulfide intermediate.

It belongs to the MnmA/TRMU family.

It is found in the cytoplasm. It carries out the reaction S-sulfanyl-L-cysteinyl-[protein] + uridine(34) in tRNA + AH2 + ATP = 2-thiouridine(34) in tRNA + L-cysteinyl-[protein] + A + AMP + diphosphate + H(+). Catalyzes the 2-thiolation of uridine at the wobble position (U34) of tRNA, leading to the formation of s(2)U34. The chain is tRNA-specific 2-thiouridylase MnmA from Rickettsia massiliae (strain Mtu5).